Here is a 72-residue protein sequence, read N- to C-terminus: Subtilisin-chymotrypsin inhibitor-2B (72 aa).

This sequence belongs to the protease inhibitor I13 (potato type I serine protease inhibitor) family.

Inhibits both subtilisin and chymotrypsin. The protein is Subtilisin-chymotrypsin inhibitor-2B of Hordeum vulgare (Barley).